The following is a 23-amino-acid chain: Gastrin-releasing peptide (23 aa).

A Methionine amide modification is found at Met23.

The protein belongs to the bombesin/neuromedin-B/ranatensin family.

It is found in the secreted. The protein localises to the cytoplasmic vesicle. It localises to the secretory vesicle lumen. Its function is as follows. Stimulates the release of gastrin and other gastrointestinal hormones. This chain is Gastrin-releasing peptide (grp), found in Oncorhynchus mykiss (Rainbow trout).